A 169-amino-acid polypeptide reads, in one-letter code: MQALNHFSRIRLSWFLLLLCIIFFEASALTFQHIMKLPPCVMCIYERVAMMGIGGAAIIGLLNPNNLIIRWCGFIAWGISAGWGLKLALEHVDFQLNPSPFSTCDLFVTFPSWAPLNKWAPWMFEAYGDCSKIVWQFLTLTMPQWLVIIFAGNLIALAIFVIAQFFNKK.

Topologically, residues 1–13 (MQALNHFSRIRLS) are cytoplasmic. Residues 14-30 (WFLLLLCIIFFEASALT) form a helical membrane-spanning segment. Residues 31 to 48 (FQHIMKLPPCVMCIYERV) are Periplasmic-facing. Cys40 and Cys43 are disulfide-bonded. A helical membrane pass occupies residues 49-64 (AMMGIGGAAIIGLLNP). The Cytoplasmic portion of the chain corresponds to 65-71 (NNLIIRW). The chain crosses the membrane as a helical span at residues 72–89 (CGFIAWGISAGWGLKLAL). The Periplasmic portion of the chain corresponds to 90–144 (EHVDFQLNPSPFSTCDLFVTFPSWAPLNKWAPWMFEAYGDCSKIVWQFLTLTMPQ). Cys104 and Cys130 are oxidised to a cystine. The helical transmembrane segment at 145–163 (WLVIIFAGNLIALAIFVIA) threads the bilayer. The Cytoplasmic segment spans residues 164-169 (QFFNKK).

It belongs to the DsbB family.

It is found in the cell inner membrane. Functionally, required for disulfide bond formation in some periplasmic proteins. Acts by oxidizing the DsbA protein. This chain is Disulfide bond formation protein B, found in Aliivibrio fischeri (strain ATCC 700601 / ES114) (Vibrio fischeri).